The primary structure comprises 92 residues: Putative septation protein SpoVG (92 aa).

It belongs to the SpoVG family.

Could be involved in septation. The protein is Putative septation protein SpoVG of Thermoanaerobacter pseudethanolicus (strain ATCC 33223 / 39E) (Clostridium thermohydrosulfuricum).